The chain runs to 304 residues: DCN1-like protein 3 (304 aa).

2 disordered regions span residues 1 to 87 (MGQC…EESS) and 285 to 304 (VEGR…EEQT). Gly-2 carries the N-myristoyl glycine lipid modification. Positions 86-278 (SSLQRLEELF…LFDTFVEWEM (193 aa)) constitute a DCUN1 domain.

Part of a complex containing DCUN1D3, CUL3 and RBX1. Interacts (via the DCUN1 domain) with the unneddylated cullins: interacts with CUL1, CUL2, CUL3, CUL4A, CUL4B and CUL5; these interactions promote the cullin neddylation and the identity of the cullin dictates the affinity of the interaction. Interacts preferentially with CUL3; this interaction triggers the relocalization of CUL3 to the cell membrane where CUL3 is neddylated. Interacts (via DCUN1 domain) with RBX1. May also interact with regulators or subunits of cullin-RING ligases such as RNF7, ELOB and DDB1; these interactions are bridged by cullins. Interacts (via DCUN1 domain) with CAND1; this interaction is bridged by cullins and strongly inhibits cullin neddylation. These CAND-cullin-DCNL complexes can only be neddylated in the presence of a substrate adapter. Interacts (via DCUN1 domain) with the N-terminally acetylated form of UBE2M and UBE2F.

The protein localises to the cell membrane. It localises to the cytoplasm. Its subcellular location is the nucleus. It is found in the perinuclear region. Contributes to the neddylation of all cullins by transferring NEDD8 from N-terminally acetylated NEDD8-conjugating E2s enzyme to different cullin C-terminal domain-RBX complexes and may play a role in the cell cycle progression by regulating the SCF ubiquitin E3 ligase complex, after UV damage. At the cell membrane, can promote and as well inhibit cullins neddylation. The chain is DCN1-like protein 3 from Rattus norvegicus (Rat).